The following is a 376-amino-acid chain: Probable transcription factor At1g61730 (376 aa).

Positions 1-150 (MTKKLNPLED…RVKKDEESVK (150 aa)) are disordered. The segment covering 17–40 (SDEDDVETSEAGEASDDSSSSEED) has biased composition (acidic residues). Ser-49 is modified (phosphoserine). Over residues 49 to 72 (SPSATTAAAPPAKSTAVSTAADSD) the composition is skewed to low complexity. A compositionally biased stretch (acidic residues) spans 73-83 (SGSETETDSDS). Residues 87–103 (NPPNSGSGKTIALNTVN) are compositionally biased toward polar residues.

The protein belongs to the GeBP family. In terms of assembly, interacts with DEK3.

This is Probable transcription factor At1g61730 from Arabidopsis thaliana (Mouse-ear cress).